The sequence spans 277 residues: Movement protein (277 aa).

It belongs to the cucumovirus movement protein family.

Its subcellular location is the host cell junction. The protein localises to the host plasmodesma. In terms of biological role, transports viral genome to neighboring plant cells directly through plasmosdesmata, without any budding. The movement protein allows efficient cell to cell propagation, by bypassing the host cell wall barrier. Acts by forming a tubular structure at the host plasmodesmata, enlarging it enough to allow free passage of virion capsids. The protein is Movement protein of Canna (Florist's daisy).